A 119-amino-acid chain; its full sequence is Phosphoribosyl-AMP cyclohydrolase (119 aa).

D72 contacts Mg(2+). Zn(2+) is bound at residue C73. Residues D74 and D76 each contribute to the Mg(2+) site. 2 residues coordinate Zn(2+): C89 and C96.

It belongs to the PRA-CH family. As to quaternary structure, homodimer. Mg(2+) serves as cofactor. It depends on Zn(2+) as a cofactor.

It is found in the cytoplasm. The enzyme catalyses 1-(5-phospho-beta-D-ribosyl)-5'-AMP + H2O = 1-(5-phospho-beta-D-ribosyl)-5-[(5-phospho-beta-D-ribosylamino)methylideneamino]imidazole-4-carboxamide. Its pathway is amino-acid biosynthesis; L-histidine biosynthesis; L-histidine from 5-phospho-alpha-D-ribose 1-diphosphate: step 3/9. In terms of biological role, catalyzes the hydrolysis of the adenine ring of phosphoribosyl-AMP. The polypeptide is Phosphoribosyl-AMP cyclohydrolase (Methanocella arvoryzae (strain DSM 22066 / NBRC 105507 / MRE50)).